A 270-amino-acid polypeptide reads, in one-letter code: Chlorophyll a-b binding protein 7, chloroplastic (270 aa).

The N-terminal 42 residues, 1–42 (MASACASSTIAAVAFSSPSSRRNGSIVGTTKASFLGGRRLRV), are a transit peptide targeting the chloroplast. W68 contributes to the chlorophyll b binding site. 3 residues coordinate chlorophyll a: F88, E107, and H110. R112 serves as a coordination point for chlorophyll b. Residues 113–133 (WAMLGAAGIFIPELLTKIGIL) traverse the membrane as a helical segment. Residue Q144 participates in chlorophyll a binding. A helical membrane pass occupies residues 146 to 166 (YFTDTTTLFIVELVLIGWAEG). Residues I155, E165, and R168 each contribute to the chlorophyll b site. Positions 221, 222, 225, 227, 239, and 254 each coordinate chlorophyll a. Residues 228–248 (LAMLAVMGAWFQHIYTGTGPI) form a helical membrane-spanning segment.

The protein belongs to the light-harvesting chlorophyll a/b-binding (LHC) protein family. As to quaternary structure, the LHC complex consists of chlorophyll a-b binding proteins. It depends on Binds at least 14 chlorophylls (8 Chl-a and 6 Chl-b) and carotenoids such as lutein and neoxanthin. as a cofactor. Post-translationally, photoregulated by reversible phosphorylation of its threonine residues.

The protein resides in the plastid. It is found in the chloroplast thylakoid membrane. Functionally, the light-harvesting complex (LHC) functions as a light receptor, it captures and delivers excitation energy to photosystems with which it is closely associated. This chain is Chlorophyll a-b binding protein 7, chloroplastic (CAB7), found in Solanum lycopersicum (Tomato).